Reading from the N-terminus, the 107-residue chain is uncharacterized protein (107 aa).

The signal sequence occupies residues M1–A34.

This is an uncharacterized protein from Saccharomyces cerevisiae (strain ATCC 204508 / S288c) (Baker's yeast).